A 275-amino-acid chain; its full sequence is MAIKKYKPYTPSMRGRVLASDFFDLSEKKAPKRLSFGIKSISGRNNQGKITCRHKGGGHKRKYRLVDFKRCKTGVLAKVSDIYYDPNRSAHIALLNYLDGEKSYIISPNLLKVGTYVVSGKEASPDIGNALPLNCVPLGFEIHNIELIHGKGGQVARAAGTSAKLIAKSQDYVTIKLPSGEIRLFRGECYATIGKVGNIDHNNEKIGKAGRNRWLGIRPTVRGSAMNAVDHPHGGGEGRSPIGRSQPSTPWGRPALGIKTRRNKFSNFYILRRRK.

The segment at 225-256 is disordered; it reads AMNAVDHPHGGGEGRSPIGRSQPSTPWGRPAL.

It belongs to the universal ribosomal protein uL2 family. Part of the 50S ribosomal subunit.

It localises to the plastid. The protein resides in the chloroplast. The polypeptide is Large ribosomal subunit protein uL2c (rpl2) (Cyanidium caldarium (Red alga)).